A 2207-amino-acid chain; its full sequence is DNA polymerase epsilon catalytic subunit A (2207 aa).

Disordered regions lie at residues 1-20 (MPSR…AASF), 1201-1233 (SMEK…PFAS), and 1934-1961 (RPES…ENEE). Zn(2+) is bound by residues cysteine 2075, cysteine 2078, cysteine 2113, and cysteine 2116. A CysA-type zinc finger spans residues 2075-2116 (CSACCLIRDLDLCRDEDVLPERGSGSGPDSATSSRPWCCPFC). [4Fe-4S] cluster-binding residues include cysteine 2147, cysteine 2150, cysteine 2162, and cysteine 2164. Positions 2147–2164 (CSKCGTLKISEFMEHCSC) match the CysB motif motif.

Belongs to the DNA polymerase type-B family. In terms of assembly, heterotetramer. Consists of 4 subunits: pol2, dpb2, dpb3 and dpb4. Requires [4Fe-4S] cluster as cofactor.

Its subcellular location is the nucleus. It carries out the reaction DNA(n) + a 2'-deoxyribonucleoside 5'-triphosphate = DNA(n+1) + diphosphate. Its function is as follows. DNA polymerase II participates in chromosomal DNA replication. The sequence is that of DNA polymerase epsilon catalytic subunit A (pol2) from Emericella nidulans (strain FGSC A4 / ATCC 38163 / CBS 112.46 / NRRL 194 / M139) (Aspergillus nidulans).